A 186-amino-acid chain; its full sequence is ATP synthase subunit delta (186 aa).

It belongs to the ATPase delta chain family. F-type ATPases have 2 components, F(1) - the catalytic core - and F(0) - the membrane proton channel. F(1) has five subunits: alpha(3), beta(3), gamma(1), delta(1), epsilon(1). F(0) has three main subunits: a(1), b(2) and c(10-14). The alpha and beta chains form an alternating ring which encloses part of the gamma chain. F(1) is attached to F(0) by a central stalk formed by the gamma and epsilon chains, while a peripheral stalk is formed by the delta and b chains.

It localises to the cell inner membrane. In terms of biological role, f(1)F(0) ATP synthase produces ATP from ADP in the presence of a proton or sodium gradient. F-type ATPases consist of two structural domains, F(1) containing the extramembraneous catalytic core and F(0) containing the membrane proton channel, linked together by a central stalk and a peripheral stalk. During catalysis, ATP synthesis in the catalytic domain of F(1) is coupled via a rotary mechanism of the central stalk subunits to proton translocation. This protein is part of the stalk that links CF(0) to CF(1). It either transmits conformational changes from CF(0) to CF(1) or is implicated in proton conduction. The chain is ATP synthase subunit delta from Nitrobacter winogradskyi (strain ATCC 25391 / DSM 10237 / CIP 104748 / NCIMB 11846 / Nb-255).